The primary structure comprises 518 residues: Mitochondrial 2-methylisocitrate lyase (518 aa).

Belongs to the isocitrate lyase/PEP mutase superfamily. Isocitrate lyase family.

The protein resides in the mitochondrion matrix. It is found in the cytoplasm. The catalysed reaction is (2S,3R)-3-hydroxybutane-1,2,3-tricarboxylate = pyruvate + succinate. It participates in organic acid metabolism; propanoate degradation. Catalyzes the formation of pyruvate and succinate from 2-methylisocitrate during the metabolism of endogenous propionyl-CoA. Does not act on isocitrate. In Schizosaccharomyces pombe (strain 972 / ATCC 24843) (Fission yeast), this protein is Mitochondrial 2-methylisocitrate lyase (icl2).